The sequence spans 594 residues: Probable acyl-CoA dehydrogenase (594 aa).

Residue Glu-405 is the Proton acceptor of the active site.

This sequence belongs to the acyl-CoA dehydrogenase family. FAD serves as cofactor.

It carries out the reaction a 2,3-saturated acyl-CoA + A = a 2,3-dehydroacyl-CoA + AH2. Its pathway is lipid metabolism; fatty acid beta-oxidation. Functionally, involved in the degradation of long-chain fatty acids. In Bacillus subtilis (strain 168), this protein is Probable acyl-CoA dehydrogenase (fadE).